The following is a 484-amino-acid chain: Glutamyl-tRNA(Gln) amidotransferase subunit A (484 aa).

Active-site charge relay system residues include lysine 76 and serine 151. Catalysis depends on serine 175, which acts as the Acyl-ester intermediate.

The protein belongs to the amidase family. GatA subfamily. In terms of assembly, heterotrimer of A, B and C subunits.

The enzyme catalyses L-glutamyl-tRNA(Gln) + L-glutamine + ATP + H2O = L-glutaminyl-tRNA(Gln) + L-glutamate + ADP + phosphate + H(+). Functionally, allows the formation of correctly charged Gln-tRNA(Gln) through the transamidation of misacylated Glu-tRNA(Gln) in organisms which lack glutaminyl-tRNA synthetase. The reaction takes place in the presence of glutamine and ATP through an activated gamma-phospho-Glu-tRNA(Gln). The protein is Glutamyl-tRNA(Gln) amidotransferase subunit A of Thioalkalivibrio sulfidiphilus (strain HL-EbGR7).